Consider the following 187-residue polypeptide: Pumilio homolog 26 (187 aa).

The Pumilio 1; degenerate repeat unit spans residues 20–42 (VATEFLRVSNDVAELHKLSSKLT). The stretch at 43–78 (SDPYLFVEFVKTIRGFLSVQTALGLSGEIDTVFLQV) is one Pumilio 2; degenerate repeat. One copy of the Pumilio 3; degenerate repeat lies at 79 to 116 (IKGWFPDLITETFSFLIVVRIINLFNKRANSKVYPDIL). A Pumilio 4; degenerate repeat occupies 117–154 (RRIGNNALYLTRNPLRGICLVEKAINVRDPDCTVFIAL). Residues 155 to 187 (KLHSHYVELSFEELGSNIVEKLLSVGESGICGV) form a Pumilio 5 repeat.

It localises to the cytoplasm. Functionally, sequence-specific RNA-binding protein that regulates translation and mRNA stability by binding the 3'-UTR of target mRNAs. The polypeptide is Pumilio homolog 26 (APUM26) (Arabidopsis thaliana (Mouse-ear cress)).